Here is a 359-residue protein sequence, read N- to C-terminus: Beta-hexosaminidase (359 aa).

Substrate is bound by residues aspartate 64, arginine 72, arginine 138, and 168–169 (KH). Histidine 181 serves as the catalytic Proton donor/acceptor. Aspartate 252 acts as the Nucleophile in catalysis.

This sequence belongs to the glycosyl hydrolase 3 family. NagZ subfamily.

Its subcellular location is the cytoplasm. The enzyme catalyses Hydrolysis of terminal non-reducing N-acetyl-D-hexosamine residues in N-acetyl-beta-D-hexosaminides.. The protein operates within cell wall biogenesis; peptidoglycan recycling. In terms of biological role, plays a role in peptidoglycan recycling by cleaving the terminal beta-1,4-linked N-acetylglucosamine (GlcNAc) from peptide-linked peptidoglycan fragments, giving rise to free GlcNAc, anhydro-N-acetylmuramic acid and anhydro-N-acetylmuramic acid-linked peptides. This Thiobacillus denitrificans (strain ATCC 25259 / T1) protein is Beta-hexosaminidase.